Consider the following 290-residue polypeptide: Acetyl-coenzyme A carboxylase carboxyl transferase subunit beta (290 aa).

A CoA carboxyltransferase N-terminal domain is found at Leu-28 to Gly-290. Zn(2+) is bound by residues Cys-32, Cys-35, Cys-51, and Cys-54. A C4-type zinc finger spans residues Cys-32 to Cys-54.

This sequence belongs to the AccD/PCCB family. Acetyl-CoA carboxylase is a heterohexamer composed of biotin carboxyl carrier protein (AccB), biotin carboxylase (AccC) and two subunits each of ACCase subunit alpha (AccA) and ACCase subunit beta (AccD). The cofactor is Zn(2+).

The protein resides in the cytoplasm. It catalyses the reaction N(6)-carboxybiotinyl-L-lysyl-[protein] + acetyl-CoA = N(6)-biotinyl-L-lysyl-[protein] + malonyl-CoA. It functions in the pathway lipid metabolism; malonyl-CoA biosynthesis; malonyl-CoA from acetyl-CoA: step 1/1. In terms of biological role, component of the acetyl coenzyme A carboxylase (ACC) complex. Biotin carboxylase (BC) catalyzes the carboxylation of biotin on its carrier protein (BCCP) and then the CO(2) group is transferred by the transcarboxylase to acetyl-CoA to form malonyl-CoA. The sequence is that of Acetyl-coenzyme A carboxylase carboxyl transferase subunit beta from Paenibacillus sp. (strain JDR-2).